The chain runs to 512 residues: Ascofuranone/ascochlorin biosynthesis clusters transcription regulator (512 aa).

Positions 14 to 49 (CDRCHSQKLRCPRSVEPEKANPEEPCSRCRKAGVPC) form a DNA-binding region, zn(2)-C6 fungal-type. Disordered regions lie at residues 54–87 (RGKV…PYDI), 118–148 (GSGS…DPLM), and 325–351 (GCTR…DGSI). Positions 56–70 (KVGRPSKATKKKSAR) are enriched in basic residues. Composition is skewed to low complexity over residues 118–127 (GSGSVTTSAS) and 327–342 (TRSS…GSSM).

The protein resides in the nucleus. Transcription factor that regulates the expression of the asc-1 and asc-2 gene clusters that mediate the biosynthesis of both ascochlorin and ascofuranone, a strong inhibitor of cyanide-insensitive alternative oxidases and a promising drug candidate against African trypanosomiasis. Binds the 5'-CGGYGNNTTW-3' motif within promoters of the target genes. In Acremonium egyptiacum (Oospora egyptiaca), this protein is Ascofuranone/ascochlorin biosynthesis clusters transcription regulator.